The following is a 480-amino-acid chain: Glutamate--tRNA ligase (480 aa).

Positions 21–31 (PSPTGYLHVGG) match the 'HIGH' region motif. Zn(2+) contacts are provided by Cys-110, Cys-112, Cys-137, and His-139. The short motif at 248 to 252 (KLSKR) is the 'KMSKS' region element. An ATP-binding site is contributed by Lys-251.

Belongs to the class-I aminoacyl-tRNA synthetase family. Glutamate--tRNA ligase type 1 subfamily. As to quaternary structure, monomer. Zn(2+) is required as a cofactor.

It localises to the cytoplasm. It catalyses the reaction tRNA(Glu) + L-glutamate + ATP = L-glutamyl-tRNA(Glu) + AMP + diphosphate. Its function is as follows. Catalyzes the attachment of glutamate to tRNA(Glu) in a two-step reaction: glutamate is first activated by ATP to form Glu-AMP and then transferred to the acceptor end of tRNA(Glu). The sequence is that of Glutamate--tRNA ligase from Actinobacillus succinogenes (strain ATCC 55618 / DSM 22257 / CCUG 43843 / 130Z).